The sequence spans 574 residues: MTWRCGCYGLVLLVLGVMGQKLPTRDEGLFQMQIRDKAQFHDSSVMPDGAEISGYLFRDTPKRYYFVVEEDNTPLLVTVTPCDAPLEWRLTLQELPEDRSGEGSGEPEPLEQQKQQVTANEGTELFTYKGNDVESFISSSSPSGLYQLEIISTEKDSNFKIYSTTTPESDQPYPELPYDPRVDVTALGRTTVTLAWKPTPTGSVMGQPIQYCVVINKEHNFKSLCAAEAKMSLDDAFMIAPKPGRDFSPFDFAYFGFVPSENDFHKDRFLTTNRALSNKMSRAYIPKPKVADIQKICIGNKNIFTITDLKPDTQYYFDVFAVNTGTNMSTAYVGTFARTKEEAKQKTVELKDGKVTDVFVKRKGSKFLRFAPVSSHQRVTLFVHACLDAVQVQVRRDGKLVLSQNVEGVRQFQLRGKPKAKYLIRLRGSRKGASTLKVLASTRAGGKQPFPALPEDTRIKAFDKLRTCSSVTVAWLGTQERNKYCVYRREVSESYGEEHRRREQNQCSGPESRRKSEKVLCKYFYSANLQKAVTTETITGLEAGKSYLLDVYVVGHSGHSVKYQSKLVKTRKYC.

A signal peptide spans 1 to 19 (MTWRCGCYGLVLLVLGVMG). The tract at residues 97 to 118 (EDRSGEGSGEPEPLEQQKQQVT) is disordered. Fibronectin type-III domains are found at residues 174–329 (PELP…TNMS) and 451–560 (PALP…SGHS). The N-linked (GlcNAc...) asparagine glycan is linked to asparagine 327.

It is found in the secreted. Functionally, secretory protein that plays a role in various cellular processes. Acts as a chemorepellent acting on gonadotropin-releasing hormone (GnRH) expressing neurons regulating their migration to the hypothalamus. Also promotes neuron migration, growth and survival as well as neurite outgrowth and is involved in the development of the olfactory system. May also act through the regulation of growth factors activity and downstream signaling. Also regulates extracellular matrix assembly and cell adhesiveness. Promotes endothelial cell survival, vessel formation and plays an important role in the process of revascularization through NOS3-dependent mechanisms. The polypeptide is Protein NDNF (ndnf) (Danio rerio (Zebrafish)).